The chain runs to 183 residues: Maltose O-acetyltransferase (183 aa).

Asn83 contributes to the acetyl-CoA binding site. His113 functions as the Proton donor/acceptor in the catalytic mechanism. Residues Gly140, Ser158, 163–164, Arg178, and Lys181 each bind acetyl-CoA; that span reads TK.

It belongs to the transferase hexapeptide repeat family. As to quaternary structure, homodimer.

It carries out the reaction D-maltose + acetyl-CoA = 1-O-acetylmaltose + CoA. Functionally, catalyzes the CoA-dependent transfer of an acetyl group to maltose and other sugars. Acetylates glucose exclusively at the C6 position and maltose at the C6 position of the non-reducing end glucosyl moiety. Is able to acetylate maltooligosaccharides. This chain is Maltose O-acetyltransferase (maa), found in Escherichia coli (strain K12).